We begin with the raw amino-acid sequence, 394 residues long: Histidinol dehydrogenase (394 aa).

Y113, Q172, and N195 together coordinate NAD(+). Substrate is bound by residues T218, Q240, and H243. Zn(2+) is bound by residues Q240 and H243. Residues E294 and H295 each act as proton acceptor in the active site. The substrate site is built by H295, D327, E380, and H385. D327 contributes to the Zn(2+) binding site. H385 contributes to the Zn(2+) binding site.

It belongs to the histidinol dehydrogenase family. Zn(2+) serves as cofactor.

The enzyme catalyses L-histidinol + 2 NAD(+) + H2O = L-histidine + 2 NADH + 3 H(+). The protein operates within amino-acid biosynthesis; L-histidine biosynthesis; L-histidine from 5-phospho-alpha-D-ribose 1-diphosphate: step 9/9. Functionally, catalyzes the sequential NAD-dependent oxidations of L-histidinol to L-histidinaldehyde and then to L-histidine. The polypeptide is Histidinol dehydrogenase (Sulfurisphaera tokodaii (strain DSM 16993 / JCM 10545 / NBRC 100140 / 7) (Sulfolobus tokodaii)).